The following is a 313-amino-acid chain: Recombination-promoting nuclease pSLT051 (313 aa).

Belongs to the Rpn/YhgA-like nuclease family.

In terms of biological role, a low activity DNA endonuclease probably yielding 3'-hydroxyl ends. Involved in RecA-independent recombination and horizontal gene transfer. The sequence is that of Recombination-promoting nuclease pSLT051 from Salmonella typhimurium (strain LT2 / SGSC1412 / ATCC 700720).